Consider the following 285-residue polypeptide: MPFAFIEQMKSVIHFDALGLSPIAFDLGVWHLFGLTLHPLIHWYALAYITGILLAWRYVLFLLKQPGTPMKPEQTDDLVFWSTLGILVGGRLAYVLFYQPAILENPLEIFKLWEGGMSYHGGMIGVFLAIWWVKTTNHLSWLRIADYIGCAAPIGLFLGRLANFVNGELWGRPSTMPWAVIFPQAGALPRHPSQLYEAGLEGILLFAFLNYQFFATKARLHPGKLAGFFLVGYGLSRFIVEWFREPDVQLGTLSWGLTMGQTLTIPMVIAGLWLIITSKKREISL.

Transmembrane regions (helical) follow at residues 17–37 (ALGLSPIAFDLGVWHLFGLTL), 43–63 (WYALAYITGILLAWRYVLFLL), 78–98 (LVFWSTLGILVGGRLAYVLFY), 113–133 (WEGGMSYHGGMIGVFLAIWWV), and 139–159 (LSWLRIADYIGCAAPIGLFLG). Arg-160 is an a 1,2-diacyl-sn-glycero-3-phospho-(1'-sn-glycerol) binding site. Transmembrane regions (helical) follow at residues 195 to 215 (LYEAGLEGILLFAFLNYQFFA), 223 to 243 (GKLAGFFLVGYGLSRFIVEWF), and 256 to 276 (GLTMGQTLTIPMVIAGLWLII).

The protein belongs to the Lgt family.

The protein localises to the cell inner membrane. It carries out the reaction L-cysteinyl-[prolipoprotein] + a 1,2-diacyl-sn-glycero-3-phospho-(1'-sn-glycerol) = an S-1,2-diacyl-sn-glyceryl-L-cysteinyl-[prolipoprotein] + sn-glycerol 1-phosphate + H(+). It functions in the pathway protein modification; lipoprotein biosynthesis (diacylglyceryl transfer). In terms of biological role, catalyzes the transfer of the diacylglyceryl group from phosphatidylglycerol to the sulfhydryl group of the N-terminal cysteine of a prolipoprotein, the first step in the formation of mature lipoproteins. The chain is Phosphatidylglycerol--prolipoprotein diacylglyceryl transferase from Zymomonas mobilis subsp. mobilis (strain ATCC 31821 / ZM4 / CP4).